The sequence spans 176 residues: Protein GrpE (176 aa).

The interval 1 to 31 (MSEQKQEFENENAENSEHLQDENLQNIEDVE) is disordered.

Belongs to the GrpE family. As to quaternary structure, homodimer.

The protein resides in the cytoplasm. In terms of biological role, participates actively in the response to hyperosmotic and heat shock by preventing the aggregation of stress-denatured proteins, in association with DnaK and GrpE. It is the nucleotide exchange factor for DnaK and may function as a thermosensor. Unfolded proteins bind initially to DnaJ; upon interaction with the DnaJ-bound protein, DnaK hydrolyzes its bound ATP, resulting in the formation of a stable complex. GrpE releases ADP from DnaK; ATP binding to DnaK triggers the release of the substrate protein, thus completing the reaction cycle. Several rounds of ATP-dependent interactions between DnaJ, DnaK and GrpE are required for fully efficient folding. In Campylobacter jejuni subsp. doylei (strain ATCC BAA-1458 / RM4099 / 269.97), this protein is Protein GrpE.